The chain runs to 1063 residues: E3 ubiquitin-protein ligase PDZRN3 (1063 aa).

Residues 18–56 form an RING-type; degenerate zinc finger; it reads CALCHKVLEDPLTTPCGHVFCAGCVLPWVVQEGSCPARC. The segment at 100–158 adopts a TRAF-type zinc-finger fold; that stretch reads EHLERCDFAPARCRHAGCGQLLLRRDVEAHMRDACDARPVGRCQEGCGLPLTHGEQRAG. PDZ domains follow at residues 249–339 and 419–503; these read TLVL…LRRT and EVGL…IARP. S427 carries the post-translational modification Phosphoserine. Residues 545–602 are disordered; that stretch reads QKKHEEDGGTTDTATILSNQHEKDSGVGRTDESTRNDESSEQENNGEDATASANPLAG. Polar residues predominate over residues 554-563; the sequence is TTDTATILSN. Positions 564–582 are enriched in basic and acidic residues; it reads QHEKDSGVGRTDESTRNDE. The stretch at 680–705 forms a coiled coil; the sequence is ESVDKELELLNEELRSIELECLSIVR. Residues 746-755 show a composition bias toward basic and acidic residues; it reads ELPEKSDKDS. Disordered stretches follow at residues 746–798 and 834–853; these read ELPE…IEAY and IKERRGSDGSRSPTASPKLG. The span at 756 to 770 shows a compositional bias: polar residues; it reads SSAYNTGESCRSTPL.

As to quaternary structure, interacts with NLGN1 and EFNB2. Interacts with UBE2D2 and with MUSK via the first PDZ domain. In myotubes, the interaction between PDZRN3 and MUSK is enhanced upon agrin stimulation. Auto-ubiquitinated. In terms of tissue distribution, highly expressed in skeletal and cardiac muscle and at lower levels in spinal cord and brain (at protein level). Also expressed in kidney and lung. In muscles, concentrated at the neuromuscular junction (NMJ).

It is found in the synapse. It localises to the cytoplasm. The enzyme catalyses S-ubiquitinyl-[E2 ubiquitin-conjugating enzyme]-L-cysteine + [acceptor protein]-L-lysine = [E2 ubiquitin-conjugating enzyme]-L-cysteine + N(6)-ubiquitinyl-[acceptor protein]-L-lysine.. It functions in the pathway protein modification; protein ubiquitination. Its function is as follows. E3 ubiquitin-protein ligase. Plays an important role in regulating the surface level of MUSK on myotubes. Mediates the ubiquitination of MUSK, promoting its endocytosis and lysosomal degradation. Might contribute to terminal myogenic differentiation. The chain is E3 ubiquitin-protein ligase PDZRN3 (Pdzrn3) from Mus musculus (Mouse).